Reading from the N-terminus, the 486-residue chain is MTTFYTVVSWLVILGYWVLIAGVTLRILMKRRAVPSAMAWLLIIYILPLVGIIAYLSVGELHLGKRRAERARAMWPSTAKWLNDLKACKHIFAQENSSVASSLFKLCERRQGIAGVKGNQLQLLTDSDDVMQALIRDIQLARHNIEMVFYIWQPGGMADQVAESLMAAARRDIHCRLMLDSAGSVAFFRSPWAAMMRNAGIEVVEALKVNLMRVFLRRMDLRQHRKMVMIDNYIAYTGSMNMVDPRFFKQDAGVGQWVDLMARMEGPVATAMGIVYSCDWEIETGKRILPPPPDVNIMPFEQASGHTIHTIASGPGFPEDLIHQALLTATYAAREYLIMTTPYFVPSDDLLHAICTAAQRGVDVSIILPRKNDSLLVGWASRAFFSELLAAGVKIYQFEGGLLHTKSVLVDGELSLVGTVNLDMRSLWLNFEITLVIDDTGFGADLAAVQDDYISRSRLLDARLWVKRPLWQRITERLFYFFSPLL.

The next 2 membrane-spanning stretches (helical) occupy residues 3–23 (TFYT…IAGV) and 38–58 (MAWL…YLSV). PLD phosphodiesterase domains lie at 219–246 (MDLR…VDPR) and 399–426 (EGGL…DMRS). Residues His224, Lys226, Asp231, His404, Lys406, and Asp411 contribute to the active site.

This sequence belongs to the phospholipase D family. Cardiolipin synthase subfamily. ClsA sub-subfamily.

The protein resides in the cell inner membrane. It catalyses the reaction 2 a 1,2-diacyl-sn-glycero-3-phospho-(1'-sn-glycerol) = a cardiolipin + glycerol. Functionally, catalyzes the reversible phosphatidyl group transfer from one phosphatidylglycerol molecule to another to form cardiolipin (CL) (diphosphatidylglycerol) and glycerol. The protein is Cardiolipin synthase A of Salmonella paratyphi A (strain ATCC 9150 / SARB42).